The sequence spans 247 residues: MLKATISADIFKDTVDALSALVTECRLHFSETEVWARAVDTANVAMIILTLKKEAFSQFEATTGEIGLDIAKLKNTYSMMGKASDIRLEHQEGANKIEVTFEGYHYSITLLDSNTIKKDPNAPGIQLPGQVTISGSELYNVIKSASIVSDKIWFAIEPEKKEFVLYAEGDSDNIRRAFSAGEVIASNWEPAKSLFSIDYLKDMGKVMSHAEKVTIDLGVDHPVKFSFEIAGGNGQVEYLLAPRIEAD.

Belongs to the PCNA family. Homotrimer. The subunits circularize to form a toroid; DNA passes through its center. Replication factor C (RFC) is required to load the toroid on the DNA.

Sliding clamp subunit that acts as a moving platform for DNA processing. Responsible for tethering the catalytic subunit of DNA polymerase and other proteins to DNA during high-speed replication. The chain is DNA polymerase sliding clamp from Methanospirillum hungatei JF-1 (strain ATCC 27890 / DSM 864 / NBRC 100397 / JF-1).